A 206-amino-acid chain; its full sequence is High frequency lysogenization protein HflD homolog (206 aa).

The protein belongs to the HflD family.

It localises to the cytoplasm. It is found in the cell inner membrane. This Pseudomonas aeruginosa (strain LESB58) protein is High frequency lysogenization protein HflD homolog.